The sequence spans 434 residues: Glutamine synthetase leaf isozyme, chloroplastic (434 aa).

Disordered stretches follow at residues 1-33 (MQVR…ARQP) and 101-126 (TISK…GQAP). Residues 1-54 (MQVRRDDDGAGGCAGDAVPGGGEGQDGVPARQPAGRVWGVSRAARATSGFKVLA) constitute a chloroplast transit peptide. Positions 10 to 25 (AGGCAGDAVPGGGEGQ) are enriched in gly residues. In terms of domain architecture, GS beta-grasp spans 81–161 (IIAEYIWVGG…VICDTYTPQG (81 aa)). The GS catalytic domain maps to 168 to 434 (KRHMAAQIFS…LAAKKLALKV (267 aa)).

Belongs to the glutamine synthetase family. Homooctamer.

Its subcellular location is the plastid. It is found in the chloroplast. It catalyses the reaction L-glutamate + NH4(+) + ATP = L-glutamine + ADP + phosphate + H(+). Functionally, the light-modulated chloroplast enzyme, encoded by a nuclear gene and expressed primarily in leaves, is responsible for the reassimilation of the ammonia generated by photorespiration. This chain is Glutamine synthetase leaf isozyme, chloroplastic, found in Hordeum vulgare (Barley).